We begin with the raw amino-acid sequence, 98 residues long: Small ribosomal subunit protein bS20 (98 aa).

A compositionally biased stretch (basic residues) spans Met1–Pro12. The tract at residues Met1–Ser34 is disordered.

Belongs to the bacterial ribosomal protein bS20 family.

In terms of biological role, binds directly to 16S ribosomal RNA. The sequence is that of Small ribosomal subunit protein bS20 from Chlamydia muridarum (strain MoPn / Nigg).